A 608-amino-acid polypeptide reads, in one-letter code: Extracellular metalloproteinase 5 (608 aa).

A signal peptide spans 1-20; the sequence is MHGLLLAAAGLLSLPLHVIA. The propeptide occupies 21–244; the sequence is HPQPSTNLAG…VHNVVDYVSH (224 aa). N285 is a glycosylation site (N-linked (GlcNAc...) asparagine). Residue H427 coordinates Zn(2+). E428 is an active-site residue. H431 lines the Zn(2+) pocket. The N-linked (GlcNAc...) asparagine glycan is linked to N591.

It belongs to the peptidase M36 family. Zn(2+) is required as a cofactor.

The protein resides in the secreted. Its function is as follows. Secreted metalloproteinase probably acting as a virulence factor. The protein is Extracellular metalloproteinase 5 (MEP5) of Trichophyton tonsurans (Scalp ringworm fungus).